We begin with the raw amino-acid sequence, 243 residues long: Ubiquinone/menaquinone biosynthesis C-methyltransferase UbiE (243 aa).

S-adenosyl-L-methionine-binding positions include threonine 69, aspartate 90, and 116-117 (DA).

It belongs to the class I-like SAM-binding methyltransferase superfamily. MenG/UbiE family.

The catalysed reaction is a 2-demethylmenaquinol + S-adenosyl-L-methionine = a menaquinol + S-adenosyl-L-homocysteine + H(+). The enzyme catalyses a 2-methoxy-6-(all-trans-polyprenyl)benzene-1,4-diol + S-adenosyl-L-methionine = a 5-methoxy-2-methyl-3-(all-trans-polyprenyl)benzene-1,4-diol + S-adenosyl-L-homocysteine + H(+). It participates in quinol/quinone metabolism; menaquinone biosynthesis; menaquinol from 1,4-dihydroxy-2-naphthoate: step 2/2. The protein operates within cofactor biosynthesis; ubiquinone biosynthesis. Methyltransferase required for the conversion of demethylmenaquinol (DMKH2) to menaquinol (MKH2) and the conversion of 2-polyprenyl-6-methoxy-1,4-benzoquinol (DDMQH2) to 2-polyprenyl-3-methyl-6-methoxy-1,4-benzoquinol (DMQH2). This is Ubiquinone/menaquinone biosynthesis C-methyltransferase UbiE from Cupriavidus necator (strain ATCC 17699 / DSM 428 / KCTC 22496 / NCIMB 10442 / H16 / Stanier 337) (Ralstonia eutropha).